A 140-amino-acid polypeptide reads, in one-letter code: uncharacterized protein (140 aa).

Residues 27 to 65 (LLGEVSELELQKICFNRSLRNEINQLEEQNDISFVRVER) are a coiled coil.

This is an uncharacterized protein from Pasteurella multocida (strain Pm70).